We begin with the raw amino-acid sequence, 112 residues long: Small ribosomal subunit protein bS6 (112 aa).

The protein belongs to the bacterial ribosomal protein bS6 family.

In terms of biological role, binds together with bS18 to 16S ribosomal RNA. This is Small ribosomal subunit protein bS6 from Legionella pneumophila (strain Paris).